A 123-amino-acid polypeptide reads, in one-letter code: Small ribosomal subunit protein uS12 (123 aa).

3-methylthioaspartic acid is present on Asp89. Residues 101–123 (TLDTSGVSDRRQSRSKYGAKRPK) form a disordered region. The segment covering 113 to 123 (SRSKYGAKRPK) has biased composition (basic residues).

The protein belongs to the universal ribosomal protein uS12 family. Part of the 30S ribosomal subunit. Contacts proteins S8 and S17. May interact with IF1 in the 30S initiation complex.

Functionally, with S4 and S5 plays an important role in translational accuracy. Interacts with and stabilizes bases of the 16S rRNA that are involved in tRNA selection in the A site and with the mRNA backbone. Located at the interface of the 30S and 50S subunits, it traverses the body of the 30S subunit contacting proteins on the other side and probably holding the rRNA structure together. The combined cluster of proteins S8, S12 and S17 appears to hold together the shoulder and platform of the 30S subunit. This is Small ribosomal subunit protein uS12 from Solidesulfovibrio magneticus (strain ATCC 700980 / DSM 13731 / RS-1) (Desulfovibrio magneticus).